A 236-amino-acid chain; its full sequence is Putative (5-formylfuran-3-yl)methyl phosphate synthase (236 aa).

The Schiff-base intermediate with substrate role is filled by lysine 38. Residue lysine 94 is the Proton acceptor of the active site.

The protein belongs to the MfnB family.

It carries out the reaction 2 D-glyceraldehyde 3-phosphate = 4-(hydroxymethyl)-2-furancarboxaldehyde phosphate + phosphate + 2 H2O. Functionally, catalyzes the formation of 4-(hydroxymethyl)-2-furancarboxaldehyde phosphate (4-HFC-P) from two molecules of glyceraldehyde-3-P (GA-3-P). The sequence is that of Putative (5-formylfuran-3-yl)methyl phosphate synthase from Methylorubrum extorquens (Methylobacterium dichloromethanicum).